Here is a 406-residue protein sequence, read N- to C-terminus: Serine hydroxymethyltransferase (406 aa).

(6S)-5,6,7,8-tetrahydrofolate is bound by residues leucine 111 and 115 to 117 (GHL). Lysine 220 carries the N6-(pyridoxal phosphate)lysine modification.

The protein belongs to the SHMT family. Homodimer. Pyridoxal 5'-phosphate is required as a cofactor.

The protein localises to the cytoplasm. The enzyme catalyses (6R)-5,10-methylene-5,6,7,8-tetrahydrofolate + glycine + H2O = (6S)-5,6,7,8-tetrahydrofolate + L-serine. The protein operates within one-carbon metabolism; tetrahydrofolate interconversion. It functions in the pathway amino-acid biosynthesis; glycine biosynthesis; glycine from L-serine: step 1/1. Functionally, catalyzes the reversible interconversion of serine and glycine with tetrahydrofolate (THF) serving as the one-carbon carrier. This reaction serves as the major source of one-carbon groups required for the biosynthesis of purines, thymidylate, methionine, and other important biomolecules. Also exhibits THF-independent aldolase activity toward beta-hydroxyamino acids, producing glycine and aldehydes, via a retro-aldol mechanism. The chain is Serine hydroxymethyltransferase from Mycoplasma pneumoniae (strain ATCC 29342 / M129 / Subtype 1) (Mycoplasmoides pneumoniae).